Reading from the N-terminus, the 397-residue chain is tRNA-specific 2-thiouridylase MnmA (397 aa).

ATP-binding positions include 19-26 (AMSGGVDS) and Leu-45. Cys-113 serves as the catalytic Nucleophile. Cysteines 113 and 210 form a disulfide. Position 137 (Gly-137) interacts with ATP. Positions 160-162 (RDQ) are interaction with tRNA. Catalysis depends on Cys-210, which acts as the Cysteine persulfide intermediate.

Belongs to the MnmA/TRMU family.

The protein localises to the cytoplasm. It catalyses the reaction S-sulfanyl-L-cysteinyl-[protein] + uridine(34) in tRNA + AH2 + ATP = 2-thiouridine(34) in tRNA + L-cysteinyl-[protein] + A + AMP + diphosphate + H(+). Its function is as follows. Catalyzes the 2-thiolation of uridine at the wobble position (U34) of tRNA, leading to the formation of s(2)U34. This Rhodopseudomonas palustris (strain ATCC BAA-98 / CGA009) protein is tRNA-specific 2-thiouridylase MnmA.